A 229-amino-acid polypeptide reads, in one-letter code: 2-C-methyl-D-erythritol 4-phosphate cytidylyltransferase (229 aa).

The protein belongs to the IspD/TarI cytidylyltransferase family. IspD subfamily.

It carries out the reaction 2-C-methyl-D-erythritol 4-phosphate + CTP + H(+) = 4-CDP-2-C-methyl-D-erythritol + diphosphate. Its pathway is isoprenoid biosynthesis; isopentenyl diphosphate biosynthesis via DXP pathway; isopentenyl diphosphate from 1-deoxy-D-xylulose 5-phosphate: step 2/6. In terms of biological role, catalyzes the formation of 4-diphosphocytidyl-2-C-methyl-D-erythritol from CTP and 2-C-methyl-D-erythritol 4-phosphate (MEP). The polypeptide is 2-C-methyl-D-erythritol 4-phosphate cytidylyltransferase (Neisseria meningitidis serogroup B (strain ATCC BAA-335 / MC58)).